Reading from the N-terminus, the 353-residue chain is Protein RecA (353 aa).

67–74 (GPESSGKT) serves as a coordination point for ATP.

It belongs to the RecA family.

It is found in the cytoplasm. Can catalyze the hydrolysis of ATP in the presence of single-stranded DNA, the ATP-dependent uptake of single-stranded DNA by duplex DNA, and the ATP-dependent hybridization of homologous single-stranded DNAs. It interacts with LexA causing its activation and leading to its autocatalytic cleavage. The polypeptide is Protein RecA (Salmonella agona (strain SL483)).